The chain runs to 1318 residues: DNA-directed RNA polymerase subunit beta' (1318 aa).

Cys221, Cys295, Cys302, and Cys305 together coordinate Zn(2+).

This sequence belongs to the RNA polymerase beta' chain family. RpoC2 subfamily. As to quaternary structure, in cyanobacteria the RNAP catalytic core is composed of 2 alpha, 1 beta, 1 beta', 1 gamma and 1 omega subunit. When a sigma factor is associated with the core the holoenzyme is formed, which can initiate transcription. Zn(2+) is required as a cofactor.

The catalysed reaction is RNA(n) + a ribonucleoside 5'-triphosphate = RNA(n+1) + diphosphate. Functionally, DNA-dependent RNA polymerase catalyzes the transcription of DNA into RNA using the four ribonucleoside triphosphates as substrates. This is DNA-directed RNA polymerase subunit beta' from Synechococcus sp. (strain ATCC 27144 / PCC 6301 / SAUG 1402/1) (Anacystis nidulans).